The following is a 207-amino-acid chain: Protein dct-5 (207 aa).

A helical membrane pass occupies residues 13-33 (LNFILSIMNSYLFVLIVSIGF).

It is found in the membrane. Its function is as follows. Acts downstream of daf-16/foxo to suppress tumors induced by disruption of gld-1. Potentially a direct target of daf-15/foxo. The sequence is that of Protein dct-5 (dct-5) from Caenorhabditis elegans.